The primary structure comprises 133 residues: Cytochrome b5 (133 aa).

Residues 4-86 enclose the Cytochrome b5 heme-binding domain; that stretch reads EKEYILDEIS…LKNYLVGNFK (83 aa). Heme is bound by residues H45 and H69. The helical transmembrane segment at 108–128 threads the bilayer; the sequence is SGTGIMLIVLMALFAIAYGYY.

This sequence belongs to the cytochrome b5 family. As to quaternary structure, interacts with alternative squalene epoxidase PHATRDRAFT_45494.

The protein localises to the endoplasmic reticulum membrane. Hemoprotein that functions as an electron carrier for membrane bound monooxygenases involved in sterol biosynthesis. The polypeptide is Cytochrome b5 (Phaeodactylum tricornutum (strain CCAP 1055/1)).